Here is a 257-residue protein sequence, read N- to C-terminus: Transmembrane protein 101 (257 aa).

8 consecutive transmembrane segments (helical) span residues 21-40 (VLLT…LYAE), 52-72 (VPYL…MSFG), 77-97 (WFAL…YIGG), 110-130 (YSRT…AGEL), 139-159 (SLQS…AYSL), 182-202 (LFFV…YVTL), 206-226 (ILAV…AYWH), and 233-253 (FWNQ…AVIL).

The protein resides in the membrane. In terms of biological role, may activate NF-kappa-B signaling pathways. The protein is Transmembrane protein 101 (TMEM101) of Homo sapiens (Human).